A 310-amino-acid chain; its full sequence is N-acetyl-gamma-glutamyl-phosphate reductase (310 aa).

The active site involves Cys-116.

The protein belongs to the NAGSA dehydrogenase family. Type 2 subfamily.

The protein localises to the cytoplasm. The enzyme catalyses N-acetyl-L-glutamate 5-semialdehyde + phosphate + NADP(+) = N-acetyl-L-glutamyl 5-phosphate + NADPH + H(+). The protein operates within amino-acid biosynthesis; L-arginine biosynthesis; N(2)-acetyl-L-ornithine from L-glutamate: step 3/4. Its function is as follows. Catalyzes the NADPH-dependent reduction of N-acetyl-5-glutamyl phosphate to yield N-acetyl-L-glutamate 5-semialdehyde. The chain is N-acetyl-gamma-glutamyl-phosphate reductase from Chelativorans sp. (strain BNC1).